Consider the following 472-residue polypeptide: Uronate isomerase (472 aa).

It belongs to the metallo-dependent hydrolases superfamily. Uronate isomerase family.

It catalyses the reaction D-glucuronate = D-fructuronate. The catalysed reaction is aldehydo-D-galacturonate = keto-D-tagaturonate. It functions in the pathway carbohydrate metabolism; pentose and glucuronate interconversion. The sequence is that of Uronate isomerase from Opitutus terrae (strain DSM 11246 / JCM 15787 / PB90-1).